A 316-amino-acid polypeptide reads, in one-letter code: Cuticle collagen 7 (316 aa).

An N-terminal signal peptide occupies residues 1–34 (MSSATFLSVMAGLSGIVVFGALISVFHIYSDINS). 2 disordered regions span residues 78–269 (KQSQ…DAAY) and 281–316 (HRNVNRHRAAASKKRVVAKKRVAKKRVVAARRHVQA). Over residues 79–90 (QSQCNCGQQASN) the composition is skewed to polar residues. Triple-helical region regions lie at residues 94–126 (GPPGPPGASGDKGHDGQPGQAGKPGQPGVAGPS), 139–198 (GLPG…PGKS), and 204–263 (GLPG…DGTP). Composition is skewed to low complexity over residues 110–125 (QPGQAGKPGQPGVAGP), 137–147 (PQGLPGPAGVP), and 177–198 (AGSAGSPGQAGAPGNPGSPGKS). Residues 209–221 (SGAPGPQGPPGAP) are compositionally biased toward pro residues. The segment covering 241-260 (PNGQPGHPGQDGQPGAPGND) has biased composition (low complexity).

It belongs to the cuticular collagen family. Collagen polypeptide chains are complexed within the cuticle by disulfide bonds and other types of covalent cross-links.

Its function is as follows. Nematode cuticles are composed largely of collagen-like proteins. The cuticle functions both as an exoskeleton and as a barrier to protect the worm from its environment. The protein is Cuticle collagen 7 (col-7) of Caenorhabditis elegans.